The chain runs to 313 residues: Ribosomal RNA small subunit methyltransferase H (313 aa).

S-adenosyl-L-methionine contacts are provided by residues 35–37, Asp-55, Phe-79, Asp-101, and Gln-108; that span reads GGH.

Belongs to the methyltransferase superfamily. RsmH family.

The protein localises to the cytoplasm. It catalyses the reaction cytidine(1402) in 16S rRNA + S-adenosyl-L-methionine = N(4)-methylcytidine(1402) in 16S rRNA + S-adenosyl-L-homocysteine + H(+). In terms of biological role, specifically methylates the N4 position of cytidine in position 1402 (C1402) of 16S rRNA. The sequence is that of Ribosomal RNA small subunit methyltransferase H from Shigella dysenteriae serotype 1 (strain Sd197).